The sequence spans 150 residues: D-aminoacyl-tRNA deacylase (150 aa).

The Gly-cisPro motif, important for rejection of L-amino acids signature appears at 138 to 139 (GP).

It belongs to the DTD family. In terms of assembly, homodimer.

The protein localises to the cytoplasm. The catalysed reaction is glycyl-tRNA(Ala) + H2O = tRNA(Ala) + glycine + H(+). The enzyme catalyses a D-aminoacyl-tRNA + H2O = a tRNA + a D-alpha-amino acid + H(+). Functionally, an aminoacyl-tRNA editing enzyme that deacylates mischarged D-aminoacyl-tRNAs. Also deacylates mischarged glycyl-tRNA(Ala), protecting cells against glycine mischarging by AlaRS. Acts via tRNA-based rather than protein-based catalysis; rejects L-amino acids rather than detecting D-amino acids in the active site. By recycling D-aminoacyl-tRNA to D-amino acids and free tRNA molecules, this enzyme counteracts the toxicity associated with the formation of D-aminoacyl-tRNA entities in vivo and helps enforce protein L-homochirality. The sequence is that of D-aminoacyl-tRNA deacylase from Chlorobaculum tepidum (strain ATCC 49652 / DSM 12025 / NBRC 103806 / TLS) (Chlorobium tepidum).